The sequence spans 188 residues: ATP synthase subunit b (188 aa).

Residues 24–44 form a helical membrane-spanning segment; sequence LPASYDIVWSLVVFIIVLILF.

Belongs to the ATPase B chain family. In terms of assembly, F-type ATPases have 2 components, F(1) - the catalytic core - and F(0) - the membrane proton channel. F(1) has five subunits: alpha(3), beta(3), gamma(1), delta(1), epsilon(1). F(0) has three main subunits: a(1), b(2) and c(10-14). The alpha and beta chains form an alternating ring which encloses part of the gamma chain. F(1) is attached to F(0) by a central stalk formed by the gamma and epsilon chains, while a peripheral stalk is formed by the delta and b chains.

Its subcellular location is the cell membrane. Its function is as follows. F(1)F(0) ATP synthase produces ATP from ADP in the presence of a proton or sodium gradient. F-type ATPases consist of two structural domains, F(1) containing the extramembraneous catalytic core and F(0) containing the membrane proton channel, linked together by a central stalk and a peripheral stalk. During catalysis, ATP synthesis in the catalytic domain of F(1) is coupled via a rotary mechanism of the central stalk subunits to proton translocation. In terms of biological role, component of the F(0) channel, it forms part of the peripheral stalk, linking F(1) to F(0). This is ATP synthase subunit b from Corynebacterium diphtheriae (strain ATCC 700971 / NCTC 13129 / Biotype gravis).